The primary structure comprises 290 residues: 33 kDa chaperonin (290 aa).

Intrachain disulfides connect Cys-235–Cys-237 and Cys-268–Cys-271.

Belongs to the HSP33 family. In terms of processing, under oxidizing conditions two disulfide bonds are formed involving the reactive cysteines. Under reducing conditions zinc is bound to the reactive cysteines and the protein is inactive.

It is found in the cytoplasm. In terms of biological role, redox regulated molecular chaperone. Protects both thermally unfolding and oxidatively damaged proteins from irreversible aggregation. Plays an important role in the bacterial defense system toward oxidative stress. The polypeptide is 33 kDa chaperonin (Streptococcus pyogenes serotype M1).